A 106-amino-acid chain; its full sequence is Thiosulfate sulfurtransferase GlpE (106 aa).

The Rhodanese domain maps to 17–105 (EQGEAKLVDI…WQRAQLPIVR (89 aa)). The active-site Cysteine persulfide intermediate is C65.

It belongs to the GlpE family.

Its subcellular location is the cytoplasm. It carries out the reaction thiosulfate + hydrogen cyanide = thiocyanate + sulfite + 2 H(+). The catalysed reaction is thiosulfate + [thioredoxin]-dithiol = [thioredoxin]-disulfide + hydrogen sulfide + sulfite + 2 H(+). Transferase that catalyzes the transfer of sulfur from thiosulfate to thiophilic acceptors such as cyanide or dithiols. May function in a CysM-independent thiosulfate assimilation pathway by catalyzing the conversion of thiosulfate to sulfite, which can then be used for L-cysteine biosynthesis. This is Thiosulfate sulfurtransferase GlpE from Vibrio parahaemolyticus serotype O3:K6 (strain RIMD 2210633).